Consider the following 2172-residue polypeptide: Non-reducing polyketide synthase dpfgA (2172 aa).

Residues 74–181 form an N-terminal acylcarrier protein transacylase domain (SAT) region; the sequence is EWIKCGNSSL…LALCVGALVD (108 aa). A Ketosynthase family 3 (KS3) domain is found at 389–783; it reads DDSIAIIGVS…GTNAAMLVCQ (395 aa). Catalysis depends on for beta-ketoacyl synthase activity residues Cys529, His665, and His706. Positions 895–1197 are malonyl-CoA:ACP transacylase (MAT) domain; it reads VFAGQTGRQA…SFHSILLQGQ (303 aa). Ser981 functions as the For acyl/malonyl transferase activity in the catalytic mechanism. Positions 1270-1403 are N-terminal hotdog fold; the sequence is PELVSLAGPT…GTINWQGQGC (134 aa). The PKS/mFAS DH domain occupies 1270-1581; the sequence is PELVSLAGPT…LKRIPIRSLQ (312 aa). The product template (PT) domain stretch occupies residues 1277–1575; the sequence is GPTDGETVEF…EIIGASLKRI (299 aa). The C-terminal hotdog fold stretch occupies residues 1428–1581; it reads SASTVQGLFV…LKRIPIRSLQ (154 aa). Disordered regions lie at residues 1608–1631 and 1650–1672; these read DSDS…HADF and YPMD…VLSD. The segment covering 1650–1668 has biased composition (low complexity); it reads YPMDSSSFSSAQPPSSASS. Positions 1671-1747 constitute a Carrier domain; that stretch reads SDHDQESTAL…DLYRMVLNHD (77 aa). At Ser1707 the chain carries O-(pantetheine 4'-phosphoryl)serine. The segment at 1751–1773 is disordered; sequence DRGSTVLSDKAPKSKSDSSLHGQ. A methyltransferase (CMeT) domain region spans residues 1975-2155; that stretch reads EFLHRVLSRL…DAGFIHVDWT (181 aa).

It functions in the pathway secondary metabolite biosynthesis; terpenoid biosynthesis. Its function is as follows. Non-reducing polyketide synthase; part of the gene cluster that mediates the biosynthesis of diterpenoid pyrones. The first step of the pathway is the synthesis of the alpha-pyrone moiety by the polyketide synthase dpfgA via condensation of one acetyl-CoA starter unit with 3 malonyl-CoA units and 2 methylations. The alpha-pyrone is then combined with geranylgeranyl pyrophosphate (GGPP) formed by the GGPP synthase dpfgD through the action of the prenyltransferase dpfgC to yield a linear alpha-pyrone diterpenoid. Subsequent steps in the diterpenoid pyrone biosynthetic pathway involve the decalin core formation, which is initiated by the epoxidation of the C10-C11 olefin by the FAD-dependent oxidoreductase dpfgE, and is followed by a cyclization cascade catalyzed by the terpene cyclase dpfgB. The short chain dehydrogenase/reductase dpfgG then oxidizes the 8S hydroxy group to a ketone and the short chain dehydrogenase/reductase dpfgH reduces the ketone to the 8R hydroxy group to yield higginsianin B. Higginsianin B is further methylated by the methyltransferase dpfgI to produce the intermediate named FDDP B. The cytochrome P450 monooxygenase dfgpJ then catalyzes a three-step oxidation at C-27 to generate a carboxylic acid as well as C-26 hydroxylation. Finally, methyltransferase dpfgK methylates the carboxylic acid generated by dpfgJ, yielding the final diterpenoid pyrones from the pathway which were named FDDP D and FDDP E. This Gibberella zeae (strain ATCC MYA-4620 / CBS 123657 / FGSC 9075 / NRRL 31084 / PH-1) (Wheat head blight fungus) protein is Non-reducing polyketide synthase dpfgA.